Here is a 387-residue protein sequence, read N- to C-terminus: ERBB-3 BINDING PROTEIN 1 (387 aa).

Necessary for nucleolar localization stretches follow at residues 1–49 (MSDD…IVDL) and 297–387 (LLQP…PMEG). The segment at 47 to 55 (VDLCEKGDA) is RNA-binding. The tract at residues 337-387 (LQPTKTTENEPEIKAWLALPTKTKKKGGGKKKKGKKGDKVEEASQAEPMEG) is disordered. Positions 356–373 (PTKTKKKGGGKKKKGKKG) are interaction with RNA. Residues 358 to 372 (KTKKKGGGKKKKGKK) show a composition bias toward basic residues. Residues 360 to 369 (KKKGGGKKKK) carry the Nuclear localization signal motif.

The protein belongs to the peptidase M24 family. As to quaternary structure, component of a ribonucleoprotein complex. Expressed during tuberisation and in roots, nodes, internodes, petioles, leaves, stolons, tubers and sprouts.

The protein resides in the nucleus. In terms of biological role, binds RNA. Associates with 28S, 18S and 5.8S mature rRNAs, several rRNA precursors and probably U3 small nucleolar RNA. May be involved in regulation of intermediate and late steps of rRNA processing. May be involved in ribosome assembly. Required for expression of cell cycle genes such as CYCD3-1, RNR2A and CDKB1-1. Promotes, in a dose- and auxin-dependent manner, organ growth by stimulating both cell proliferation and expansion, via the regulation of RBR1 levels. This chain is ERBB-3 BINDING PROTEIN 1, found in Solanum tuberosum (Potato).